Consider the following 1254-residue polypeptide: DNA-directed RNA polymerase subunit beta (1254 aa).

The protein belongs to the RNA polymerase beta chain family. In terms of assembly, the RNAP catalytic core consists of 2 alpha, 1 beta, 1 beta' and 1 omega subunit. When a sigma factor is associated with the core the holoenzyme is formed, which can initiate transcription.

It catalyses the reaction RNA(n) + a ribonucleoside 5'-triphosphate = RNA(n+1) + diphosphate. DNA-dependent RNA polymerase catalyzes the transcription of DNA into RNA using the four ribonucleoside triphosphates as substrates. The chain is DNA-directed RNA polymerase subunit beta from Protochlamydia amoebophila (strain UWE25).